Here is a 158-residue protein sequence, read N- to C-terminus: MAIFEGSFTTASTLKVGIVIARFNDLITNKILSGCLDCLKRHGLDTSELSNQVDIVWVPGSFELPIAAKTLMKKKSYDVVIALGAVIRGETSHYDVVISEASKGISQVSNENNVPIIFGVLTTDTMQQALERAGIKNNLGWNYALQAIEMGSLIKNLN.

5-amino-6-(D-ribitylamino)uracil-binding positions include Phe23, 61 to 63, and 85 to 87; these read SFE and AVI. Residue 90 to 91 coordinates (2S)-2-hydroxy-3-oxobutyl phosphate; it reads ET. His93 serves as the catalytic Proton donor. Position 118 (Phe118) interacts with 5-amino-6-(D-ribitylamino)uracil. Arg132 is a binding site for (2S)-2-hydroxy-3-oxobutyl phosphate.

It belongs to the DMRL synthase family.

The enzyme catalyses (2S)-2-hydroxy-3-oxobutyl phosphate + 5-amino-6-(D-ribitylamino)uracil = 6,7-dimethyl-8-(1-D-ribityl)lumazine + phosphate + 2 H2O + H(+). It functions in the pathway cofactor biosynthesis; riboflavin biosynthesis; riboflavin from 2-hydroxy-3-oxobutyl phosphate and 5-amino-6-(D-ribitylamino)uracil: step 1/2. Its function is as follows. Catalyzes the formation of 6,7-dimethyl-8-ribityllumazine by condensation of 5-amino-6-(D-ribitylamino)uracil with 3,4-dihydroxy-2-butanone 4-phosphate. This is the penultimate step in the biosynthesis of riboflavin. This chain is 6,7-dimethyl-8-ribityllumazine synthase, found in Prochlorococcus marinus (strain AS9601).